Here is a 336-residue protein sequence, read N- to C-terminus: 3-isopropylmalate dehydrogenase (336 aa).

Arg87, Arg97, Arg121, and Asp211 together coordinate substrate. Asp211, Asp235, and Asp239 together coordinate Mg(2+). 271–283 (GSAPDIAGQGVAD) contributes to the NAD(+) binding site.

Belongs to the isocitrate and isopropylmalate dehydrogenases family. LeuB type 2 subfamily. Homodimer. Mg(2+) serves as cofactor. The cofactor is Mn(2+).

The protein resides in the cytoplasm. It catalyses the reaction (2R,3S)-3-isopropylmalate + NAD(+) = 4-methyl-2-oxopentanoate + CO2 + NADH. It participates in amino-acid biosynthesis; L-leucine biosynthesis; L-leucine from 3-methyl-2-oxobutanoate: step 3/4. In terms of biological role, catalyzes the oxidation of 3-carboxy-2-hydroxy-4-methylpentanoate (3-isopropylmalate) to 3-carboxy-4-methyl-2-oxopentanoate. The product decarboxylates to 4-methyl-2 oxopentanoate. The sequence is that of 3-isopropylmalate dehydrogenase from Mycobacterium avium (strain 104).